The primary structure comprises 430 residues: Glutamate-1-semialdehyde 2,1-aminomutase (430 aa).

An N6-(pyridoxal phosphate)lysine modification is found at Lys270.

This sequence belongs to the class-III pyridoxal-phosphate-dependent aminotransferase family. HemL subfamily. Homodimer. The cofactor is pyridoxal 5'-phosphate.

It is found in the cytoplasm. It carries out the reaction (S)-4-amino-5-oxopentanoate = 5-aminolevulinate. It functions in the pathway porphyrin-containing compound metabolism; protoporphyrin-IX biosynthesis; 5-aminolevulinate from L-glutamyl-tRNA(Glu): step 2/2. The polypeptide is Glutamate-1-semialdehyde 2,1-aminomutase (Cupriavidus necator (strain ATCC 17699 / DSM 428 / KCTC 22496 / NCIMB 10442 / H16 / Stanier 337) (Ralstonia eutropha)).